The following is a 717-amino-acid chain: DNA ligase (717 aa).

NAD(+) contacts are provided by residues 44–48 (DAEYD), 93–94 (SL), and Glu127. Lys129 functions as the N6-AMP-lysine intermediate in the catalytic mechanism. NAD(+) contacts are provided by Arg150, Glu186, Lys302, and Lys326. 4 residues coordinate Zn(2+): Cys431, Cys434, Cys455, and Cys461. Residues 639-717 (TSGSPVVGKT…EDEWLELIGG (79 aa)) enclose the BRCT domain.

Belongs to the NAD-dependent DNA ligase family. LigA subfamily. It depends on Mg(2+) as a cofactor. Requires Mn(2+) as cofactor.

It carries out the reaction NAD(+) + (deoxyribonucleotide)n-3'-hydroxyl + 5'-phospho-(deoxyribonucleotide)m = (deoxyribonucleotide)n+m + AMP + beta-nicotinamide D-nucleotide.. DNA ligase that catalyzes the formation of phosphodiester linkages between 5'-phosphoryl and 3'-hydroxyl groups in double-stranded DNA using NAD as a coenzyme and as the energy source for the reaction. It is essential for DNA replication and repair of damaged DNA. The chain is DNA ligase from Rhizobium rhizogenes (strain K84 / ATCC BAA-868) (Agrobacterium radiobacter).